A 184-amino-acid polypeptide reads, in one-letter code: uncharacterized protein (184 aa).

This is an uncharacterized protein from Archaeoglobus fulgidus (strain ATCC 49558 / DSM 4304 / JCM 9628 / NBRC 100126 / VC-16).